Consider the following 1857-residue polypeptide: Peripheral-type benzodiazepine receptor-associated protein 1 (1857 aa).

Disordered regions lie at residues 1–103, 284–321, and 565–629; these read MEQL…RPED, QRET…QEDA, and PKDL…DTAS. Positions 55 to 67 are enriched in basic and acidic residues; it reads LRSEESSKPKGDG. Polar residues predominate over residues 87–96; sequence LGQQASSSGP. Residues 289 to 298 show a composition bias toward pro residues; that stretch reads PLPPSWPPGP. Low complexity-rich tracts occupy residues 299–316 and 603–616; these read ALQA…GEAT and SLSN…IHNS. An SH3 1 domain is found at 653–720; that stretch reads ARIQVFLARY…PSNFVERVSD (68 aa). Residues 729 to 789 form a disordered region; it reads PELADLSHSS…PSPEGLGEPP (61 aa). Positions 755-764 are enriched in low complexity; the sequence is GGQSSVGRSQ. Fibronectin type-III domains follow at residues 791 to 882, 884 to 976, and 981 to 1081; these read VPYP…ARAG, VPSQ…TLPA, and APLD…LAPA. Disordered stretches follow at residues 1083 to 1311, 1330 to 1479, and 1501 to 1601; these read LPAR…SDEE, FSIP…CSRG, and YDSE…RGVR. A compositionally biased stretch (low complexity) spans 1098 to 1116; it reads ARAPLASASPGPGDPSSPL. A compositionally biased stretch (basic and acidic residues) spans 1138–1147; sequence EMAKGSHEDP. Residues 1201-1218 show a composition bias toward polar residues; the sequence is ASSSTQGARAQQAPNTEM. Positions 1259–1274 are enriched in acidic residues; sequence DIQEEEEEEEEEEEEE. Residues 1278–1292 show a composition bias toward polar residues; the sequence is RTCSFQKQVAGNSIR. Residues 1333 to 1346 show a composition bias toward acidic residues; that stretch reads PEEEEEEEEDEEEE. Basic and acidic residues-rich tracts occupy residues 1420-1429 and 1554-1586; these read RPPDPREHCS and AWEK…EARG. In terms of domain architecture, SH3 2 spans 1625-1693; sequence LPVRIFVALF…PCNMVAEVAV (69 aa). Disordered stretches follow at residues 1723 to 1761 and 1823 to 1857; these read VYST…VPSA and SNFL…RVQC. In terms of domain architecture, SH3 3 spans 1764 to 1831; the sequence is KAPHSMVAAF…PSNFLEGPGP (68 aa).

This sequence belongs to the RIMBP family. As to quaternary structure, interacts with RIMS1 and RIMS2. Interacts with TSPO. Interacts with CACNA1A. As to expression, predominantly expressed in brain, pituitary gland and thymus in adults. In adult brain, highest expression found in temporal lobe and the putamen, followed by amygdala, caudate nucleus, cerebral cortex, occipital and frontal lobe. A high expression level is also observed in fetal tissues like brain, heart, kidney and thymus.

The protein localises to the cytoplasm. Its subcellular location is the mitochondrion. Required for synaptic transmission regulation. It probably controls the recruitement of voltage-gated calcium channels to the presynaptic membrane, and modulates neurotransmitter release. This is Peripheral-type benzodiazepine receptor-associated protein 1 from Homo sapiens (Human).